We begin with the raw amino-acid sequence, 89 residues long: MSLFRFFSKPASAPQARERLQVLLAHERASHEHSDLVAVLREEILAVIAKHIQIDRDKVSVKMDRGDQMSTLEVDIELPLKTKAKVRAA.

This sequence belongs to the MinE family.

Prevents the cell division inhibition by proteins MinC and MinD at internal division sites while permitting inhibition at polar sites. This ensures cell division at the proper site by restricting the formation of a division septum at the midpoint of the long axis of the cell. This is Cell division topological specificity factor from Brucella anthropi (strain ATCC 49188 / DSM 6882 / CCUG 24695 / JCM 21032 / LMG 3331 / NBRC 15819 / NCTC 12168 / Alc 37) (Ochrobactrum anthropi).